Here is a 128-residue protein sequence, read N- to C-terminus: Small ribosomal subunit protein uS11 (128 aa).

Belongs to the universal ribosomal protein uS11 family. In terms of assembly, part of the 30S ribosomal subunit. Interacts with proteins S7 and S18. Binds to IF-3.

In terms of biological role, located on the platform of the 30S subunit, it bridges several disparate RNA helices of the 16S rRNA. Forms part of the Shine-Dalgarno cleft in the 70S ribosome. The sequence is that of Small ribosomal subunit protein uS11 from Vesicomyosocius okutanii subsp. Calyptogena okutanii (strain HA).